A 152-amino-acid polypeptide reads, in one-letter code: UPF0756 membrane protein CA_C0092 (152 aa).

Transmembrane regions (helical) follow at residues 5-25 (IILVVILGISIVGKATSVAIS), 50-70 (MFWGLVLLTAAILIPIAQGNV), 82-102 (FVGITALVLSFLTTYLSGVGL), and 117-137 (LILGSVAAAAFLGGVPVGPLI).

The protein belongs to the UPF0756 family.

The protein resides in the cell membrane. This chain is UPF0756 membrane protein CA_C0092, found in Clostridium acetobutylicum (strain ATCC 824 / DSM 792 / JCM 1419 / IAM 19013 / LMG 5710 / NBRC 13948 / NRRL B-527 / VKM B-1787 / 2291 / W).